Here is a 198-residue protein sequence, read N- to C-terminus: Suppressor of cytokine signaling 2 (198 aa).

The interval 1–75 (MTLRCLESSG…PEGTFLIRDS (75 aa)) is interaction with AREL1. Positions 6-30 (LESSGNGAEGAQSQWGTAGSAEEPS) are disordered. Residues 8–22 (SSGNGAEGAQSQWGT) show a composition bias toward polar residues. A phosphoserine mark is found at Ser30 and Ser52. The SH2 domain maps to 48-156 (WYWGSMTVNE…TVHLYLTKPL (109 aa)). In terms of domain architecture, SOCS box spans 151 to 197 (YLTKPLYTSAPPLQHLCRLTINKCTSTVWGLPLPTRLKDYLEEYKFQ). Lys173 participates in a covalent cross-link: Glycyl lysine isopeptide (Lys-Gly) (interchain with G-Cter in ubiquitin).

As to quaternary structure, substrate-recognition component of the ECS(SOCS2) complex, composed of SOCS2, CUL5, ELOB, ELOC and RNF7/RBX2. Interacts with IGF1R. Interacts with DCUN1D1. Ubiquitinated; mediated by AREL1 and leading to its subsequent proteasomal degradation. Ubiquitination is dependent on its phosphorylation at Ser-52, by PKC. Ubiquitination is stimulated by LPS. Post-translationally, phosphorylation at Ser-52 by PKC facilitates its ubiquitination and proteasomal degradation.

The protein localises to the cytoplasm. It functions in the pathway protein modification; protein ubiquitination. Functionally, substrate-recognition component of a cullin-5-RING E3 ubiquitin-protein ligase complex (ECS complex, also named CRL5 complex), which mediates the ubiquitination and subsequent proteasomal degradation of target proteins, such as EPOR and GHR. Specifically recognizes and binds phosphorylated proteins via its SH2 domain, promoting their ubiquitination. The ECS(SOCS2) complex acts as a key regulator of growth hormone receptor (GHR) levels by mediating ubiquitination and degradation of GHR, following GHR phosphorylation by JAK2. The ECS(SOCS2) also catalyzes ubiquitination and degradation of JAK2-phosphorylated EPOR. The chain is Suppressor of cytokine signaling 2 (SOCS2) from Bos taurus (Bovine).